Here is a 339-residue protein sequence, read N- to C-terminus: Cyclic AMP-dependent transcription factor ATF-4 (339 aa).

Disordered stretches follow at residues 14 to 62 (GPWP…PSEL), 153 to 182 (PEEI…HTEV), and 209 to 313 (QNIS…EKAD). The segment covering 35 to 55 (VLEGSWSPSSSSLSSFSPPAS) has biased composition (low complexity). The segment covering 162–173 (SPAPSVPSPPEE) has biased composition (pro residues). Over residues 211–226 (ISDCSDSDSGISVSGS) the composition is skewed to low complexity. A compositionally biased stretch (basic and acidic residues) spans 231 to 247 (SDLEPSSRAKPYSRPDP). The 64-residue stretch at 266–329 (VEKKLKKMEQ…QYLRDLLEEM (64 aa)) folds into the bZIP domain. Residues 268-288 (KKLKKMEQNKTAATRYRQKKR) form a basic motif region. The leucine-zipper stretch occupies residues 294 to 322 (LNSECSELEKKNRELSEKADSLSREIQYL). Residues 300–313 (ELEKKNRELSEKAD) are compositionally biased toward basic and acidic residues.

It belongs to the bZIP family. In terms of assembly, binds DNA as a homodimer and as a heterodimer.

Its subcellular location is the nucleus. Transcription factor that binds the cAMP response element (CRE) (consensus: 5'-GTGACGT[AC][AG]-3') and displays two biological functions, as regulator of metabolic and redox processes under normal cellular conditions, and as master transcription factor during integrated stress response (ISR). Binds to asymmetric CRE's as a heterodimer and to palindromic CRE's as a homodimer. Core effector of the ISR, which is required for adaptation to various stress such as endoplasmic reticulum (ER) stress, amino acid starvation, mitochondrial stress or oxidative stress. During ISR, atf4 translation is induced via an alternative ribosome translation re-initiation mechanism in response to eif2s1/eIF-2-alpha phosphorylation, and stress-induced atf4 acts as a master transcription factor of stress-responsive genes in order to promote cell recovery. Promotes the transcription of genes linked to amino acid sufficiency and resistance to oxidative stress to protect cells against metabolic consequences of ER oxidation. In the absence of stress, atf4 translation is at low levels and it is required for normal metabolic processes such as embryonic lens formation, fetal liver hematopoiesis, bone development and synaptic plasticity. Acts as a regulator of osteoblast differentiation by promoting expression of osteoblast-specific genes. Regulates the circadian expression of the core clock components. Mainly acts as a transcriptional activator in cellular stress adaptation, but it can also act as a transcriptional repressor. In Danio rerio (Zebrafish), this protein is Cyclic AMP-dependent transcription factor ATF-4 (atf4).